A 337-amino-acid polypeptide reads, in one-letter code: Ornithine carbamoyltransferase, catabolic (337 aa).

Residues 57-60 (STRT), Q84, R108, and 135-138 (HPTQ) contribute to the carbamoyl phosphate site. Residues N167, D231, and 235 to 236 (SM) contribute to the L-ornithine site. Carbamoyl phosphate-binding positions include 272–273 (CL) and R317.

It belongs to the aspartate/ornithine carbamoyltransferase superfamily. OTCase family.

Its subcellular location is the cytoplasm. The enzyme catalyses carbamoyl phosphate + L-ornithine = L-citrulline + phosphate + H(+). Its pathway is amino-acid degradation; L-arginine degradation via ADI pathway; carbamoyl phosphate from L-arginine: step 2/2. Its function is as follows. Reversibly catalyzes the transfer of the carbamoyl group from carbamoyl phosphate (CP) to the N(epsilon) atom of ornithine (ORN) to produce L-citrulline. The sequence is that of Ornithine carbamoyltransferase, catabolic from Streptococcus suis (strain 89/1591).